Reading from the N-terminus, the 142-residue chain is uncharacterized protein (142 aa).

One can recognise an N-acetyltransferase domain in the interval 1 to 138 (MLEKLAEAHP…SFMILVKPLA (138 aa)).

This is an uncharacterized protein from Bacillus subtilis (strain 168).